A 313-amino-acid chain; its full sequence is tRNA uridine(34) hydroxylase (313 aa).

The 95-residue stretch at 124–218 (SDPEVLLIDT…YLEEVPQQES (95 aa)) folds into the Rhodanese domain. Catalysis depends on Cys-178, which acts as the Cysteine persulfide intermediate.

It belongs to the TrhO family.

The catalysed reaction is uridine(34) in tRNA + AH2 + O2 = 5-hydroxyuridine(34) in tRNA + A + H2O. Catalyzes oxygen-dependent 5-hydroxyuridine (ho5U) modification at position 34 in tRNAs. The polypeptide is tRNA uridine(34) hydroxylase (Pseudomonas fluorescens (strain ATCC BAA-477 / NRRL B-23932 / Pf-5)).